Consider the following 334-residue polypeptide: Ornithine carbamoyltransferase (334 aa).

Residues 57-60, glutamine 84, arginine 108, and 135-138 contribute to the carbamoyl phosphate site; these read STRT and HPTQ. L-ornithine contacts are provided by residues asparagine 169, aspartate 233, and 237 to 238; that span reads SM. Carbamoyl phosphate contacts are provided by residues 275-276 and arginine 320; that span reads CL.

This sequence belongs to the aspartate/ornithine carbamoyltransferase superfamily. OTCase family.

Its subcellular location is the cytoplasm. It carries out the reaction carbamoyl phosphate + L-ornithine = L-citrulline + phosphate + H(+). The protein operates within amino-acid biosynthesis; L-arginine biosynthesis; L-arginine from L-ornithine and carbamoyl phosphate: step 1/3. Functionally, reversibly catalyzes the transfer of the carbamoyl group from carbamoyl phosphate (CP) to the N(epsilon) atom of ornithine (ORN) to produce L-citrulline. This chain is Ornithine carbamoyltransferase, found in Vibrio vulnificus (strain YJ016).